A 350-amino-acid polypeptide reads, in one-letter code: Nicotinate-nucleotide--dimethylbenzimidazole phosphoribosyltransferase (350 aa).

Glu316 acts as the Proton acceptor in catalysis.

This sequence belongs to the CobT family.

It catalyses the reaction 5,6-dimethylbenzimidazole + nicotinate beta-D-ribonucleotide = alpha-ribazole 5'-phosphate + nicotinate + H(+). Its pathway is nucleoside biosynthesis; alpha-ribazole biosynthesis; alpha-ribazole from 5,6-dimethylbenzimidazole: step 1/2. Its function is as follows. Catalyzes the synthesis of alpha-ribazole-5'-phosphate from nicotinate mononucleotide (NAMN) and 5,6-dimethylbenzimidazole (DMB). The protein is Nicotinate-nucleotide--dimethylbenzimidazole phosphoribosyltransferase of Pseudomonas syringae pv. syringae (strain B728a).